A 353-amino-acid chain; its full sequence is tRNA-cytidine(32) 2-sulfurtransferase (353 aa).

Residues 49–54 (SGGKDS) carry the PP-loop motif motif. [4Fe-4S] cluster is bound by residues C124, C127, and C215.

This sequence belongs to the TtcA family. As to quaternary structure, homodimer. Mg(2+) serves as cofactor. It depends on [4Fe-4S] cluster as a cofactor.

It localises to the cytoplasm. The catalysed reaction is cytidine(32) in tRNA + S-sulfanyl-L-cysteinyl-[cysteine desulfurase] + AH2 + ATP = 2-thiocytidine(32) in tRNA + L-cysteinyl-[cysteine desulfurase] + A + AMP + diphosphate + H(+). It participates in tRNA modification. Functionally, catalyzes the ATP-dependent 2-thiolation of cytidine in position 32 of tRNA, to form 2-thiocytidine (s(2)C32). The sulfur atoms are provided by the cysteine/cysteine desulfurase (IscS) system. The chain is tRNA-cytidine(32) 2-sulfurtransferase from Sodalis glossinidius (strain morsitans).